The following is a 572-amino-acid chain: Urease subunit alpha (572 aa).

In terms of domain architecture, Urease spans 134–572 (AGIDTHIHLI…AAMNQLYFFG (439 aa)). Histidine 139, histidine 141, and lysine 222 together coordinate Ni(2+). Lysine 222 carries the N6-carboxylysine modification. Substrate is bound at residue histidine 224. Ni(2+)-binding residues include histidine 251 and histidine 277. Histidine 325 acts as the Proton donor in catalysis. Position 365 (aspartate 365) interacts with Ni(2+).

Belongs to the metallo-dependent hydrolases superfamily. Urease alpha subunit family. As to quaternary structure, heterotrimer of UreA (gamma), UreB (beta) and UreC (alpha) subunits. Three heterotrimers associate to form the active enzyme. Ni cation is required as a cofactor. In terms of processing, carboxylation allows a single lysine to coordinate two nickel ions.

The protein resides in the cytoplasm. The enzyme catalyses urea + 2 H2O + H(+) = hydrogencarbonate + 2 NH4(+). Its pathway is nitrogen metabolism; urea degradation; CO(2) and NH(3) from urea (urease route): step 1/1. The protein is Urease subunit alpha of Edwardsiella ictaluri (strain 93-146).